Here is a 306-residue protein sequence, read N- to C-terminus: tRNA dimethylallyltransferase (306 aa).

6–13 (GPTASGKS) is a binding site for ATP. Residue 8–13 (TASGKS) participates in substrate binding.

It belongs to the IPP transferase family. As to quaternary structure, monomer. Mg(2+) is required as a cofactor.

The catalysed reaction is adenosine(37) in tRNA + dimethylallyl diphosphate = N(6)-dimethylallyladenosine(37) in tRNA + diphosphate. Its function is as follows. Catalyzes the transfer of a dimethylallyl group onto the adenine at position 37 in tRNAs that read codons beginning with uridine, leading to the formation of N6-(dimethylallyl)adenosine (i(6)A). This Sphingopyxis alaskensis (strain DSM 13593 / LMG 18877 / RB2256) (Sphingomonas alaskensis) protein is tRNA dimethylallyltransferase.